The sequence spans 635 residues: Threonine--tRNA ligase (635 aa).

Positions 1–61 constitute a TGS domain; sequence MIKITLKDGK…HKDSSLEILT (61 aa). Residues 242 to 532 are catalytic; the sequence is DHRKLGKELD…LIEQYAGAFP (291 aa). Residues cysteine 333, histidine 384, and histidine 509 each coordinate Zn(2+).

The protein belongs to the class-II aminoacyl-tRNA synthetase family. In terms of assembly, homodimer. Zn(2+) serves as cofactor.

Its subcellular location is the cytoplasm. It carries out the reaction tRNA(Thr) + L-threonine + ATP = L-threonyl-tRNA(Thr) + AMP + diphosphate + H(+). Catalyzes the attachment of threonine to tRNA(Thr) in a two-step reaction: L-threonine is first activated by ATP to form Thr-AMP and then transferred to the acceptor end of tRNA(Thr). Also edits incorrectly charged L-seryl-tRNA(Thr). The protein is Threonine--tRNA ligase of Clostridium botulinum (strain ATCC 19397 / Type A).